A 120-amino-acid chain; its full sequence is Large ribosomal subunit protein bL12 (120 aa).

This sequence belongs to the bacterial ribosomal protein bL12 family. Homodimer. Part of the ribosomal stalk of the 50S ribosomal subunit. Forms a multimeric L10(L12)X complex, where L10 forms an elongated spine to which 2 to 4 L12 dimers bind in a sequential fashion. Binds GTP-bound translation factors.

Its function is as follows. Forms part of the ribosomal stalk which helps the ribosome interact with GTP-bound translation factors. Is thus essential for accurate translation. This is Large ribosomal subunit protein bL12 from Brevibacillus brevis (strain 47 / JCM 6285 / NBRC 100599).